Reading from the N-terminus, the 269-residue chain is Phosphate import ATP-binding protein PstB (269 aa).

The 240-residue stretch at 14–253 folds into the ABC transporter domain; sequence LSLENVSISY…EFNSTKKIFN (240 aa). 46–53 contacts ATP; sequence GPSGCGKS.

It belongs to the ABC transporter superfamily. Phosphate importer (TC 3.A.1.7) family. In terms of assembly, the complex is composed of two ATP-binding proteins (PstB), two transmembrane proteins (PstC and PstA) and a solute-binding protein (PstS).

It localises to the cell inner membrane. It carries out the reaction phosphate(out) + ATP + H2O = ADP + 2 phosphate(in) + H(+). Functionally, part of the ABC transporter complex PstSACB involved in phosphate import. Responsible for energy coupling to the transport system. The protein is Phosphate import ATP-binding protein PstB of Prochlorococcus marinus (strain MIT 9312).